Consider the following 608-residue polypeptide: Kelch-like protein 10 (608 aa).

A BTB domain is found at 39-106; that stretch reads CDVVIKVNGF…AYTRTVPITP (68 aa). Kelch repeat units lie at residues 292-339, 340-386, 388-433, 434-480, 481-527, and 529-574; these read ILFA…YLKG, YVYI…VLSN, IYAM…TLYG, KVYI…AYGE, HVYA…VVDD, and LFVV…VVPG. Residue Ser-501 is modified to Phosphoserine.

In terms of assembly, self-associates. Interacts with CUL3; indicative for the participation in an E3 ubiquitin ligase complex. Testis specific.

It is found in the cytoplasm. The protein operates within protein modification; protein ubiquitination. Its function is as follows. May be a substrate-specific adapter of a CUL3-based E3 ubiquitin-protein ligase complex which mediates the ubiquitination and subsequent proteasomal degradation of target proteins during spermatogenesis. Required for male fertility. This is Kelch-like protein 10 (Klhl10) from Mus musculus (Mouse).